The following is a 277-amino-acid chain: Thiazole synthase (277 aa).

K119 (schiff-base intermediate with DXP) is an active-site residue. 1-deoxy-D-xylulose 5-phosphate-binding positions include G180, A206–G207, and N228–T229.

The protein belongs to the ThiG family. As to quaternary structure, homotetramer. Forms heterodimers with either ThiH or ThiS.

It localises to the plastid. It is found in the chloroplast. It catalyses the reaction [ThiS sulfur-carrier protein]-C-terminal-Gly-aminoethanethioate + 2-iminoacetate + 1-deoxy-D-xylulose 5-phosphate = [ThiS sulfur-carrier protein]-C-terminal Gly-Gly + 2-[(2R,5Z)-2-carboxy-4-methylthiazol-5(2H)-ylidene]ethyl phosphate + 2 H2O + H(+). It participates in cofactor biosynthesis; thiamine diphosphate biosynthesis. Functionally, catalyzes the rearrangement of 1-deoxy-D-xylulose 5-phosphate (DXP) to produce the thiazole phosphate moiety of thiamine. Sulfur is provided by the thiocarboxylate moiety of the carrier protein ThiS. In vitro, sulfur can be provided by H(2)S. In Porphyra purpurea (Red seaweed), this protein is Thiazole synthase.